Reading from the N-terminus, the 1118-residue chain is uncharacterized protein (1118 aa).

3 disordered regions span residues 1–69 (MESG…NGED), 1044–1071 (PKSV…EKID), and 1090–1118 (IRPT…SFEL). Residues 13 to 34 (DMVEEDNDEDSFEEPACEDSFD) show a composition bias toward acidic residues. Residues 35–60 (SQEASSKANEPQNDSFDEPIQSSVSK) are compositionally biased toward polar residues. The segment covering 1107–1118 (EDSDDLEDSFEL) has biased composition (acidic residues).

This is an uncharacterized protein from Caenorhabditis elegans.